Here is a 140-residue protein sequence, read N- to C-terminus: DegV domain-containing 15.5 kDa protein (140 aa).

The 137-residue stretch at 4–140 (QIIVTDSTSD…ELVLLQSKKI (137 aa)) folds into the DegV domain. Hexadecanoate contacts are provided by threonine 61 and serine 93.

Its function is as follows. May bind long-chain fatty acids, such as palmitate, and may play a role in lipid transport or fatty acid metabolism. The sequence is that of DegV domain-containing 15.5 kDa protein from Staphylococcus aureus.